A 255-amino-acid chain; its full sequence is Indole-3-glycerol phosphate synthase (255 aa).

It belongs to the TrpC family.

It catalyses the reaction 1-(2-carboxyphenylamino)-1-deoxy-D-ribulose 5-phosphate + H(+) = (1S,2R)-1-C-(indol-3-yl)glycerol 3-phosphate + CO2 + H2O. Its pathway is amino-acid biosynthesis; L-tryptophan biosynthesis; L-tryptophan from chorismate: step 4/5. This chain is Indole-3-glycerol phosphate synthase, found in Streptococcus sanguinis (strain SK36).